Reading from the N-terminus, the 266-residue chain is Killer cell lectin-like receptor 6 (266 aa).

Residues 1–44 (MSEPEVTYSTVRLHKSSRLQKLVRHEETQGPREAGYRKCSVCWQ) lie on the Cytoplasmic side of the membrane. Residues 45–66 (LIVKALGILCFLLLITVAVLAV) form a helical; Signal-anchor for type II membrane protein membrane-spanning segment. At 67 to 266 (KIFQYGQHNQ…CGKKLDKFPH (200 aa)) the chain is on the extracellular side. Residues N87 and N104 are each glycosylated (N-linked (GlcNAc...) asparagine). Residues 143 to 261 (GVKYWFCYRT…SHYCICGKKL (119 aa)) enclose the C-type lectin domain. Intrachain disulfides connect C149/C154, C167/C255, C171/C257, and C236/C249.

As to quaternary structure, homodimer; disulfide-linked.

It is found in the membrane. Receptor on natural killer (NK) cells for class I MHC. The chain is Killer cell lectin-like receptor 6 (Klra6) from Mus musculus (Mouse).